Here is a 444-residue protein sequence, read N- to C-terminus: C4-dicarboxylate transport protein (444 aa).

9 helical membrane passes run 18 to 40 (FYSH…GHFY), 53 to 75 (AFIK…TGIA), 90 to 112 (AMLY…ANVV), 142 to 159 (IVGF…GAFA), 163 to 180 (ILQV…LAMV), 201 to 222 (LVAI…FTIG), 232 to 254 (LAML…LGAV), 327 to 349 (LFIA…LLVA), and 364 to 386 (FITL…ALIL).

Belongs to the dicarboxylate/amino acid:cation symporter (DAACS) (TC 2.A.23) family.

The protein resides in the cell inner membrane. Responsible for the transport of dicarboxylates such as succinate, fumarate, and malate from the periplasm across the inner membrane. This transport system plays an important role in the energy supply of rhizobium-legume symbionts. This is C4-dicarboxylate transport protein (dctA) from Rhizobium leguminosarum.